Here is an 843-residue protein sequence, read N- to C-terminus: Glycogen phosphorylase, brain form (843 aa).

The residue at position 2 (alanine 2) is an N-acetylalanine. Phosphoserine; by PHK; in form phosphorylase A is present on serine 15. Aspartate 43, tyrosine 197, and arginine 310 together coordinate AMP. Tyrosine 197 bears the Phosphotyrosine mark. The residue at position 473 (tyrosine 473) is a Phosphotyrosine. Lysine 569 is a pyridoxal 5'-phosphate binding site. The segment at 677-678 (TG) is pyridoxal 5'-phosphate. Position 681 is an N6-(pyridoxal phosphate)lysine (lysine 681).

Belongs to the glycogen phosphorylase family. Homodimer. Dimers associate into a tetramer to form the enzymatically active phosphorylase A. Pyridoxal 5'-phosphate serves as cofactor. Post-translationally, phosphorylated. Phosphorylation of Ser-15 converts phosphorylase B (unphosphorylated) to phosphorylase A.

The enzyme catalyses [(1-&gt;4)-alpha-D-glucosyl](n) + phosphate = [(1-&gt;4)-alpha-D-glucosyl](n-1) + alpha-D-glucose 1-phosphate. Its activity is regulated as follows. Activity of phosphorylase is controlled both by allosteric means (through the non-covalent binding of metabolites) and by covalent modification. Thus AMP allosterically activates, whereas ATP, ADP, and glucose-6-phosphate allosterically inhibit, phosphorylase B. Activated upon phosphorylation. In terms of biological role, glycogen phosphorylase that regulates glycogen mobilization. Phosphorylase is an important allosteric enzyme in carbohydrate metabolism. Enzymes from different sources differ in their regulatory mechanisms and in their natural substrates. However, all known phosphorylases share catalytic and structural properties. The protein is Glycogen phosphorylase, brain form of Homo sapiens (Human).